The following is a 286-amino-acid chain: uncharacterized protein (286 aa).

Residues Ile54, Asn128, and Lys162 each coordinate NADP(+). Ser178 (proton donor) is an active-site residue. Positions 192, 196, 225, and 227 each coordinate NADP(+). Tyr192 functions as the Proton acceptor in the catalytic mechanism. The active-site Lowers pKa of active site Tyr is the Lys196.

It belongs to the short-chain dehydrogenases/reductases (SDR) family.

This is an uncharacterized protein from Schizosaccharomyces pombe (strain 972 / ATCC 24843) (Fission yeast).